A 132-amino-acid chain; its full sequence is C-X-C motif chemokine 5 (132 aa).

The signal sequence occupies residues 1–40; the sequence is MSLQLRSSARIPSGSISPFMRMAPLAFLLLFTLPQHLAEA. 2 disulfide bridges follow: C53–C79 and C55–C95.

The protein belongs to the intercrine alpha (chemokine CxC) family. Monomer. Homodimer. Post-translationally, GCP-2(1-78) and GCP-2(9-78) are produced by proteolytic cleavage after secretion from fibroblasts and epithelial cells. GCP-2(9-78) is the most prominent form. A number of additional N-terminal (processed between pos. 41 and 48) and C-terminal (processed between pos. 118 and 132) processed forms have been identified, probably also representing intermediate states.

The protein resides in the secreted. May participate in the recruitment of inflammatory cells by injured or infected tissue. GCP-2(1-78) and, more potent, GCP-2(9-78) attract neutrophils and are involved in neutrophil activation. The sequence is that of C-X-C motif chemokine 5 (Cxcl5) from Mus musculus (Mouse).